Here is a 121-residue protein sequence, read N- to C-terminus: Large ribosomal subunit protein uL18 (121 aa).

The protein belongs to the universal ribosomal protein uL18 family. As to quaternary structure, part of the 50S ribosomal subunit; part of the 5S rRNA/L5/L18/L25 subcomplex. Contacts the 5S and 23S rRNAs.

In terms of biological role, this is one of the proteins that bind and probably mediate the attachment of the 5S RNA into the large ribosomal subunit, where it forms part of the central protuberance. This is Large ribosomal subunit protein uL18 from Methylibium petroleiphilum (strain ATCC BAA-1232 / LMG 22953 / PM1).